Reading from the N-terminus, the 230-residue chain is L-aspartate/glutamate-specific racemase (230 aa).

Substrate contacts are provided by residues Met10, Gln52, and 83–85 (TNT). The active-site Proton donor is the Thr83. Cys197 (proton acceptor) is an active-site residue. 198-199 (TE) lines the substrate pocket.

The protein belongs to the aspartate/glutamate racemases family. As to quaternary structure, homodimer.

It catalyses the reaction L-glutamate = D-glutamate. The enzyme catalyses L-aspartate = D-aspartate. In terms of biological role, exhibits racemase activity for both L-glutamate and L-aspartate. In Escherichia coli O157:H7, this protein is L-aspartate/glutamate-specific racemase.